Reading from the N-terminus, the 329-residue chain is Glycerol-3-phosphate dehydrogenase [NAD(P)+] (329 aa).

The NADPH site is built by Trp11, Arg30, and Lys103. Residues Lys103, Gly132, and Ser134 each contribute to the sn-glycerol 3-phosphate site. Residue Ala136 coordinates NADPH. Lys187, Asp240, Ser250, Arg251, and Asn252 together coordinate sn-glycerol 3-phosphate. The active-site Proton acceptor is the Lys187. Arg251 provides a ligand contact to NADPH. Residues Val275 and Glu277 each contribute to the NADPH site.

This sequence belongs to the NAD-dependent glycerol-3-phosphate dehydrogenase family.

The protein resides in the cytoplasm. It carries out the reaction sn-glycerol 3-phosphate + NAD(+) = dihydroxyacetone phosphate + NADH + H(+). The catalysed reaction is sn-glycerol 3-phosphate + NADP(+) = dihydroxyacetone phosphate + NADPH + H(+). It functions in the pathway membrane lipid metabolism; glycerophospholipid metabolism. In terms of biological role, catalyzes the reduction of the glycolytic intermediate dihydroxyacetone phosphate (DHAP) to sn-glycerol 3-phosphate (G3P), the key precursor for phospholipid synthesis. This Dechloromonas aromatica (strain RCB) protein is Glycerol-3-phosphate dehydrogenase [NAD(P)+].